Reading from the N-terminus, the 351-residue chain is Peptide chain release factor 1 (351 aa).

N5-methylglutamine is present on Gln229.

This sequence belongs to the prokaryotic/mitochondrial release factor family. Methylated by PrmC. Methylation increases the termination efficiency of RF1.

Its subcellular location is the cytoplasm. Peptide chain release factor 1 directs the termination of translation in response to the peptide chain termination codons UAG and UAA. The protein is Peptide chain release factor 1 of Cereibacter sphaeroides (strain ATCC 17025 / ATH 2.4.3) (Rhodobacter sphaeroides).